A 281-amino-acid polypeptide reads, in one-letter code: NADPH-dependent 7-cyano-7-deazaguanine reductase (281 aa).

87–89 contributes to the substrate binding site; the sequence is IES. 89-90 contacts NADPH; sequence SK. Cys-188 acts as the Thioimide intermediate in catalysis. Asp-195 serves as the catalytic Proton donor. Substrate is bound at residue 227–228; it reads HE. 256-257 provides a ligand contact to NADPH; it reads RG. The interval 261-281 is disordered; it reads INPYRSTEQDKPAHNHRMARQ.

Belongs to the GTP cyclohydrolase I family. QueF type 2 subfamily. As to quaternary structure, homodimer.

It is found in the cytoplasm. It carries out the reaction 7-aminomethyl-7-carbaguanine + 2 NADP(+) = 7-cyano-7-deazaguanine + 2 NADPH + 3 H(+). The protein operates within tRNA modification; tRNA-queuosine biosynthesis. Functionally, catalyzes the NADPH-dependent reduction of 7-cyano-7-deazaguanine (preQ0) to 7-aminomethyl-7-deazaguanine (preQ1). This Vibrio parahaemolyticus serotype O3:K6 (strain RIMD 2210633) protein is NADPH-dependent 7-cyano-7-deazaguanine reductase.